The primary structure comprises 258 residues: Acyl-[acyl-carrier-protein]--UDP-N-acetylglucosamine O-acyltransferase (258 aa).

Belongs to the transferase hexapeptide repeat family. LpxA subfamily. As to quaternary structure, homotrimer.

The protein resides in the cytoplasm. It catalyses the reaction a (3R)-hydroxyacyl-[ACP] + UDP-N-acetyl-alpha-D-glucosamine = a UDP-3-O-[(3R)-3-hydroxyacyl]-N-acetyl-alpha-D-glucosamine + holo-[ACP]. The protein operates within glycolipid biosynthesis; lipid IV(A) biosynthesis; lipid IV(A) from (3R)-3-hydroxytetradecanoyl-[acyl-carrier-protein] and UDP-N-acetyl-alpha-D-glucosamine: step 1/6. In terms of biological role, involved in the biosynthesis of lipid A, a phosphorylated glycolipid that anchors the lipopolysaccharide to the outer membrane of the cell. The chain is Acyl-[acyl-carrier-protein]--UDP-N-acetylglucosamine O-acyltransferase from Ectopseudomonas mendocina (strain ymp) (Pseudomonas mendocina).